The primary structure comprises 504 residues: UDP-GalNAc:beta-1,3-N-acetylgalactosaminyltransferase 2 (504 aa).

Residues 1–3 are Cytoplasmic-facing; it reads MRN. A helical; Signal-anchor for type II membrane protein transmembrane segment spans residues 4–24; sequence WLVLLCPCVLGAALHLWHLWL. Over 25–504 the chain is Lumenal; the sequence is RSPPDPHNTG…DPCQCEAKVR (480 aa). N-linked (GlcNAc...) asparagine glycosylation is found at asparagine 117 and asparagine 176.

It belongs to the glycosyltransferase 31 family. N-glycosylated. Present in testis (at protein level). In testis, it is mainly detected in the middle layers of seminiferous tubules at stages XII to II. Strongly expressed in primary and secondary spermatocytes and early round spermatids, but not in spermatogonia, elongating or elongated spermatids, or in Leydig or Sertoli cells.

It is found in the golgi apparatus membrane. The protein resides in the endoplasmic reticulum. The enzyme catalyses 3-O-(N-acetyl-beta-D-glucosaminyl-(1-&gt;4)-alpha-D-mannosyl)-L-threonyl-[protein] + UDP-N-acetyl-alpha-D-galactosamine = 3-O-[beta-D-GalNAc-(1-&gt;3)-beta-D-GlcNAc-(1-&gt;4)-alpha-D-Man]-L-Thr-[protein] + UDP + H(+). Its pathway is protein modification; protein glycosylation. In terms of biological role, beta-1,3-N-acetylgalactosaminyltransferase that synthesizes a unique carbohydrate structure, GalNAc-beta-1-3GlcNAc, on N- and O-glycans. Has no galactose nor galactosaminyl transferase activity toward any acceptor substrate. Involved in alpha-dystroglycan (DAG1) glycosylation: acts coordinately with GTDC2/POMGnT2 to synthesize a GalNAc-beta3-GlcNAc-beta-terminus at the 4-position of protein O-mannose in the biosynthesis of the phosphorylated O-mannosyl trisaccharide (N-acetylgalactosamine-beta-3-N-acetylglucosamine-beta-4-(phosphate-6-)mannose), a carbohydrate structure present in alpha-dystroglycan, which is required for binding laminin G-like domain-containing extracellular proteins with high affinity. The chain is UDP-GalNAc:beta-1,3-N-acetylgalactosaminyltransferase 2 (B3galnt2) from Mus musculus (Mouse).